Reading from the N-terminus, the 707-residue chain is B-cell lymphoma 6 protein homolog (707 aa).

Residues 32-99 (TDVVIVVSRE…MYTSRLNLRE (68 aa)) form the BTB domain. The tract at residues 275 to 350 (HYSVPEGPKP…QPNSPTESCS (76 aa)) is disordered. Residues 299–315 (KASKEEERPSSEDEIAL) show a composition bias toward basic and acidic residues. Over residues 331–350 (SPQSPQKSDCQPNSPTESCS) the composition is skewed to polar residues. Residue Ser334 is modified to Phosphoserine. Phosphoserine; by MAPK1 is present on Ser344. Ser362 bears the Phosphoserine mark. Positions 377–380 (KKYK) are required for interaction with NuRD complex and for transcriptional repressor activity. The residue at position 380 (Lys380) is an N6-acetyllysine; by EP300. Ser405 is modified (phosphoserine). The tract at residues 405–469 (SPRAYPAPPA…RSSSESHSPL (65 aa)) is disordered. A compositionally biased stretch (pro residues) spans 409-420 (YPAPPACQPPME). The segment covering 425 to 452 (DLQSPTKLSASGEDSTIPQASRLNNLVN) has biased composition (polar residues). Over residues 458-467 (SPRSSSESHS) the composition is skewed to low complexity. 6 consecutive C2H2-type zinc fingers follow at residues 519-542 (FFCN…LQTH), 547-569 (YKCD…KTVH), 575-597 (YRCN…TRIH), 603-625 (YKCE…VLIH), 631-653 (YPCE…LRIH), and 659-682 (YHCE…RQKH).

Homodimer. Interacts (via BTB domain) with the corepressors BCOR, NCOR1 and SMRT/NCOR2; the interactions are direct. Forms preferably ternary complexes with BCOR and SMRT/NCOR2 on target gene promoters but, on enhancer elements, interacts with SMRT/NCOR2 and HDAC3 to repress proximal gene expression. Interacts with histone deacetylases HDAC2, HDAC5 and HDAC9 (via the catalytic domain). Interacts with ZBTB7 and BCL6B. Interacts with SCF(FBXO11) complex; the interaction is independent of phosphorylation and promotes ubiquitination. Interacts (when phosphorylated) with PIN1; the interaction is required for BCL6 degradation upon genotoxic stress. Interacts with ZBTB17; inhibits ZBTB17 transcriptional activity. Interacts with CTBP1, autoinhibits its transcriptional expression. Interacts with NOTCH1 NCID and SIRT1; leads to a epigenetic repression of selective NOTCH1-target genes. Interacts (nor via BTB domain neither acetylated) with the NuRD complex components CHD4, HDAC1, MBD3 and MTA3; the interaction with MTA3 inhibits BCL6 acetylation and is required for BCL6 transpriptional repression. Post-translationally, phosphorylated by MAPK1 in response to antigen receptor activation at Ser-334 and Ser-344. Phosphorylated by ATM in response to genotoxic stress. Phosphorylation induces its degradation by ubiquitin/proteasome pathway. In terms of processing, polyubiquitinated. Polyubiquitinated by SCF(FBXO11), leading to its degradation by the proteasome. Ubiquitinated by the SCF(FBXL17) complex, leading to its degradation by the proteasome: ubiquitination by the SCF(FBXL17) complex takes place when aberrant BTB domain dimers are formed. Acetylated at Lys-380 by EP300 which inhibits the interaction with NuRD complex and the transcriptional repressor function. Deacetylated by HDAC- and SIR2-dependent pathways. Expressed at least in germinal center B-cells of spleen.

Its subcellular location is the nucleus. Functionally, transcriptional repressor mainly required for germinal center (GC) formation and antibody affinity maturation which has different mechanisms of action specific to the lineage and biological functions. Forms complexes with different corepressors and histone deacetylases to repress the transcriptional expression of different subsets of target genes. Represses its target genes by binding directly to the DNA sequence 5'-TTCCTAGAA-3' (BCL6-binding site) or indirectly by repressing the transcriptional activity of transcription factors. In GC B-cells, represses genes that function in differentiation, inflammation, apoptosis and cell cycle control, also autoregulates its transcriptional expression and up-regulates, indirectly, the expression of some genes important for GC reactions, such as AICDA, through the repression of microRNAs expression, like miR155. An important function is to allow GC B-cells to proliferate very rapidly in response to T-cell dependent antigens and tolerate the physiological DNA breaks required for immunglobulin class switch recombination and somatic hypermutation without inducing a p53/TP53-dependent apoptotic response. In follicular helper CD4(+) T-cells (T(FH) cells), promotes the expression of T(FH)-related genes but inhibits the differentiation of T(H)1, T(H)2 and T(H)17 cells. Also required for the establishment and maintenance of immunological memory for both T- and B-cells. Suppresses macrophage proliferation through competition with STAT5 for STAT-binding motifs binding on certain target genes, such as CCL2 and CCND2. In response to genotoxic stress, controls cell cycle arrest in GC B-cells in both p53/TP53-dependedent and -independent manners. Besides, also controls neurogenesis through the alteration of the composition of NOTCH-dependent transcriptional complexes at selective NOTCH targets, such as HES5, including the recruitment of the deacetylase SIRT1 and resulting in an epigenetic silencing leading to neuronal differentiation. This is B-cell lymphoma 6 protein homolog (Bcl6) from Mus musculus (Mouse).